The chain runs to 1486 residues: Chromosome partition protein MukB (1486 aa).

ATP is bound at residue 34 to 41 (GGNGAGKS). Coiled coils occupy residues 326–418 (LEAD…QYNQ), 444–480 (LETFQAKELEATEKMLSLEQKMSMAQTAHSQFEQAYQ), and 509–603 (RHLA…RAPV). Positions 666–783 (PGGSEDQRLN…EVPLFGRAAR (118 aa)) are flexible hinge. 3 coiled-coil regions span residues 835-923 (EAEI…AKLE), 977-1115 (EMLS…TAKA), and 1209-1266 (VEAI…QNVS).

The protein belongs to the SMC family. MukB subfamily. Homodimerization via its hinge domain. Binds to DNA via its C-terminal region. Interacts, and probably forms a ternary complex, with MukE and MukF via its C-terminal region. The complex formation is stimulated by calcium or magnesium. Interacts with tubulin-related protein FtsZ.

It localises to the cytoplasm. It is found in the nucleoid. Plays a central role in chromosome condensation, segregation and cell cycle progression. Functions as a homodimer, which is essential for chromosome partition. Involved in negative DNA supercoiling in vivo, and by this means organize and compact chromosomes. May achieve or facilitate chromosome segregation by condensation DNA from both sides of a centrally located replisome during cell division. The polypeptide is Chromosome partition protein MukB (Escherichia coli (strain K12 / MC4100 / BW2952)).